The following is a 720-amino-acid chain: Nucleoporin 88 (720 aa).

The stretch at Leu-584–Arg-611 forms a coiled coil.

As to expression, widely expressed. Higher levels of expression are detected in highly proliferative frontal regions of the embryo, e.g. brain, eye and anterior trunk.

It localises to the nucleus. The protein localises to the nuclear pore complex. Its function is as follows. Component of the nuclear pore complex. In Danio rerio (Zebrafish), this protein is Nucleoporin 88.